The chain runs to 446 residues: Signal recognition particle 54 kDa protein (446 aa).

GTP is bound by residues 103-110 (GVQGTGKT), 185-189 (DTAGR), and 245-248 (TKMD).

The protein belongs to the GTP-binding SRP family. SRP54 subfamily. Part of the signal recognition particle protein translocation system, which is composed of SRP and FtsY. Archaeal SRP consists of a 7S RNA molecule of 300 nucleotides and two protein subunits: SRP54 and SRP19.

The protein resides in the cytoplasm. The enzyme catalyses GTP + H2O = GDP + phosphate + H(+). Involved in targeting and insertion of nascent membrane proteins into the cytoplasmic membrane. Binds to the hydrophobic signal sequence of the ribosome-nascent chain (RNC) as it emerges from the ribosomes. The SRP-RNC complex is then targeted to the cytoplasmic membrane where it interacts with the SRP receptor FtsY. In Metallosphaera sedula (strain ATCC 51363 / DSM 5348 / JCM 9185 / NBRC 15509 / TH2), this protein is Signal recognition particle 54 kDa protein.